Reading from the N-terminus, the 466-residue chain is ATP synthase subunit beta (466 aa).

Position 152-159 (152-159 (GGAGVGKT)) interacts with ATP.

This sequence belongs to the ATPase alpha/beta chains family. As to quaternary structure, F-type ATPases have 2 components, CF(1) - the catalytic core - and CF(0) - the membrane proton channel. CF(1) has five subunits: alpha(3), beta(3), gamma(1), delta(1), epsilon(1). CF(0) has three main subunits: a(1), b(2) and c(9-12). The alpha and beta chains form an alternating ring which encloses part of the gamma chain. CF(1) is attached to CF(0) by a central stalk formed by the gamma and epsilon chains, while a peripheral stalk is formed by the delta and b chains.

The protein resides in the cell inner membrane. The enzyme catalyses ATP + H2O + 4 H(+)(in) = ADP + phosphate + 5 H(+)(out). Produces ATP from ADP in the presence of a proton gradient across the membrane. The catalytic sites are hosted primarily by the beta subunits. In Helicobacter acinonychis (strain Sheeba), this protein is ATP synthase subunit beta.